The chain runs to 130 residues: Large ribosomal subunit protein bL17 (130 aa).

Belongs to the bacterial ribosomal protein bL17 family. In terms of assembly, part of the 50S ribosomal subunit. Contacts protein L32.

This chain is Large ribosomal subunit protein bL17, found in Azotobacter vinelandii (strain DJ / ATCC BAA-1303).